The sequence spans 214 residues: Ribonuclease HII (214 aa).

Residues 27–214 (SVVAGIDEAG…SPIKQMCAIV (188 aa)) enclose the RNase H type-2 domain. A divalent metal cation is bound by residues aspartate 33, glutamate 34, and aspartate 126.

This sequence belongs to the RNase HII family. Mn(2+) is required as a cofactor. Mg(2+) serves as cofactor.

Its subcellular location is the cytoplasm. It carries out the reaction Endonucleolytic cleavage to 5'-phosphomonoester.. Functionally, endonuclease that specifically degrades the RNA of RNA-DNA hybrids. This is Ribonuclease HII (rnhB) from Chlamydia pneumoniae (Chlamydophila pneumoniae).